A 129-amino-acid chain; its full sequence is M-zodatoxin-Lt8b (129 aa).

Positions Met1–Ser20 are cleaved as a signal peptide. The propeptide occupies Lys21–Arg60. The short motif at Glu57 to Arg60 is the Processing quadruplet motif element.

Cleavage of the propeptide depends on the processing quadruplet motif (XXXR, with at least one of X being E). As to expression, expressed by the venom gland.

Its subcellular location is the secreted. Insecticidal, cytolytic and antimicrobial peptide. Forms voltage-dependent, ion-permeable channels in membranes. At high concentration causes cell membrane lysis. The polypeptide is M-zodatoxin-Lt8b (cit 1-2) (Lachesana tarabaevi (Spider)).